The following is a 155-amino-acid chain: Ribosomal RNA large subunit methyltransferase H (155 aa).

S-adenosyl-L-methionine contacts are provided by residues Leu72, Gly103, and 122–127 (LSPLTL).

This sequence belongs to the RNA methyltransferase RlmH family. In terms of assembly, homodimer.

The protein localises to the cytoplasm. It carries out the reaction pseudouridine(1915) in 23S rRNA + S-adenosyl-L-methionine = N(3)-methylpseudouridine(1915) in 23S rRNA + S-adenosyl-L-homocysteine + H(+). In terms of biological role, specifically methylates the pseudouridine at position 1915 (m3Psi1915) in 23S rRNA. The chain is Ribosomal RNA large subunit methyltransferase H from Pasteurella multocida (strain Pm70).